The chain runs to 396 residues: Maltose/maltodextrin-binding periplasmic protein (396 aa).

The N-terminal stretch at 1 to 26 is a signal peptide; the sequence is MKIKTGARILALSALTTMMFSASALA.

The protein belongs to the bacterial solute-binding protein 1 family. In terms of assembly, the complex is composed of two ATP-binding proteins (MalK), two transmembrane proteins (MalG and MalF) and a solute-binding protein (MalE).

The protein localises to the periplasm. In terms of biological role, part of the ABC transporter complex MalEFGK involved in maltose/maltodextrin import. Binds maltose and higher maltodextrins. In Klebsiella aerogenes (Enterobacter aerogenes), this protein is Maltose/maltodextrin-binding periplasmic protein (malE).